The primary structure comprises 238 residues: Phosphoribosylaminoimidazole-succinocarboxamide synthase (238 aa).

It belongs to the SAICAR synthetase family.

It catalyses the reaction 5-amino-1-(5-phospho-D-ribosyl)imidazole-4-carboxylate + L-aspartate + ATP = (2S)-2-[5-amino-1-(5-phospho-beta-D-ribosyl)imidazole-4-carboxamido]succinate + ADP + phosphate + 2 H(+). The protein operates within purine metabolism; IMP biosynthesis via de novo pathway; 5-amino-1-(5-phospho-D-ribosyl)imidazole-4-carboxamide from 5-amino-1-(5-phospho-D-ribosyl)imidazole-4-carboxylate: step 1/2. The protein is Phosphoribosylaminoimidazole-succinocarboxamide synthase of Alcanivorax borkumensis (strain ATCC 700651 / DSM 11573 / NCIMB 13689 / SK2).